A 160-amino-acid chain; its full sequence is Transcription elongation factor GreA (160 aa).

Residues 1 to 71 adopt a coiled-coil conformation; that stretch reads MAEKTYPMTK…GQISTLETQI (71 aa).

The protein belongs to the GreA/GreB family.

In terms of biological role, necessary for efficient RNA polymerase transcription elongation past template-encoded arresting sites. The arresting sites in DNA have the property of trapping a certain fraction of elongating RNA polymerases that pass through, resulting in locked ternary complexes. Cleavage of the nascent transcript by cleavage factors such as GreA or GreB allows the resumption of elongation from the new 3'terminus. GreA releases sequences of 2 to 3 nucleotides. The sequence is that of Transcription elongation factor GreA from Streptococcus uberis (strain ATCC BAA-854 / 0140J).